Reading from the N-terminus, the 259-residue chain is Dickkopf-related protein 2 (259 aa).

The signal sequence occupies residues 1–33 (MAALMRVKDSSRCLLLLAAVLMVESSQLGSSRA). The disordered stretch occupies residues 42–70 (LGGETPAQSANRSAGMNQGLAFGGSKKGK). Over residues 47–57 (PAQSANRSAGM) the composition is skewed to polar residues. Asparagine 52 carries an N-linked (GlcNAc...) asparagine glycan. The DKK-type Cys-1 stretch occupies residues 78–127 (CSSDKECEVGRYCHSPHQGSSACMLCRRKKKRCHRDGMCCPGTRCNNGIC). 5 disulfide bridges follow: cysteine 183–cysteine 195, cysteine 189–cysteine 204, cysteine 194–cysteine 231, cysteine 214–cysteine 239, and cysteine 233–cysteine 256. The segment at 183–256 (CLRSSDCIDG…YSSKARLHVC (74 aa)) is DKK-type Cys-2.

The protein belongs to the dickkopf family. As to quaternary structure, interacts with LRP5 and LRP6. In terms of processing, may be proteolytically processed by a furin-like protease.

It is found in the secreted. Antagonizes canonical Wnt signaling by inhibiting LRP5/6 interaction with Wnt and by forming a ternary complex with the transmembrane protein KREMEN that promotes internalization of LRP5/6. DKKs play an important role in vertebrate development, where they locally inhibit Wnt regulated processes such as antero-posterior axial patterning, limb development, somitogenesis and eye formation. In the adult, Dkks are implicated in bone formation and bone disease, cancer and Alzheimer disease. This chain is Dickkopf-related protein 2, found in Mus musculus (Mouse).